The primary structure comprises 594 residues: Glutamate decarboxylase 1 (594 aa).

Low complexity predominate over residues 1 to 13 (MASSTPSSSATSS). Residues 1-23 (MASSTPSSSATSSNAGADPNTTN) form a disordered region. The residue at position 78 (S78) is a Phosphoserine. Residue 190–192 (QLS) participates in 4-aminobutanoate binding. K405 carries the N6-(pyridoxal phosphate)lysine modification. R567 lines the 4-aminobutanoate pocket.

This sequence belongs to the group II decarboxylase family. In terms of assembly, homodimer. The cofactor is pyridoxal 5'-phosphate.

It carries out the reaction L-glutamate + H(+) = 4-aminobutanoate + CO2. Functionally, catalyzes the synthesis of the inhibitory neurotransmitter gamma-aminobutyric acid (GABA) with pyridoxal 5'-phosphate as cofactor. The protein is Glutamate decarboxylase 1 (GAD1) of Bos taurus (Bovine).